The sequence spans 316 residues: D-alanine--D-alanine ligase (316 aa).

The 199-residue stretch at 112–310 (KTALKAHGLP…FGKLCRWLVE (199 aa)) folds into the ATP-grasp domain. 139 to 189 (MATPYVVKPNNEGSSVGVYLVNEAANGPPHLSDDMPDEVMVETYAPGRELT) contacts ATP. 3 residues coordinate Mg(2+): Asp261, Glu277, and Asn279.

This sequence belongs to the D-alanine--D-alanine ligase family. Mg(2+) is required as a cofactor. Mn(2+) serves as cofactor.

It is found in the cytoplasm. The catalysed reaction is 2 D-alanine + ATP = D-alanyl-D-alanine + ADP + phosphate + H(+). It functions in the pathway cell wall biogenesis; peptidoglycan biosynthesis. Its function is as follows. Cell wall formation. This chain is D-alanine--D-alanine ligase, found in Jannaschia sp. (strain CCS1).